The following is a 623-amino-acid chain: ATP-dependent lipid A-core flippase (623 aa).

The next 5 helical transmembrane spans lie at 66–86 (LVLA…LAVI), 103–123 (VWFL…CNFF), 190–210 (LVVI…TLII), 290–310 (LTPL…AVAL), and 317–337 (ALTV…FDPI). The region spanning 67-349 (VLAVLLMAGA…LTNLAGKMQK (283 aa)) is the ABC transmembrane type-1 domain. The 237-residue stretch at 382–618 (VEFRAVSHRF…NGLYASLYNM (237 aa)) folds into the ABC transporter domain. An ATP-binding site is contributed by 416-423 (GRSGSGKT).

The protein belongs to the ABC transporter superfamily. Lipid exporter (TC 3.A.1.106) family. In terms of assembly, homodimer.

It localises to the cell inner membrane. The catalysed reaction is ATP + H2O + lipid A-core oligosaccharideSide 1 = ADP + phosphate + lipid A-core oligosaccharideSide 2.. Its function is as follows. Involved in lipopolysaccharide (LPS) biosynthesis. Translocates lipid A-core from the inner to the outer leaflet of the inner membrane. Transmembrane domains (TMD) form a pore in the inner membrane and the ATP-binding domain (NBD) is responsible for energy generation. This is ATP-dependent lipid A-core flippase from Bordetella bronchiseptica (strain ATCC BAA-588 / NCTC 13252 / RB50) (Alcaligenes bronchisepticus).